The sequence spans 298 residues: tRNA pseudouridine synthase-like 1 (298 aa).

The Nucleophile role is filled by Asp-60. Tyr-124 provides a ligand contact to substrate.

The protein belongs to the tRNA pseudouridine synthase TruA family.

It carries out the reaction a uridine in tRNA = a pseudouridine in tRNA. This Xenopus laevis (African clawed frog) protein is tRNA pseudouridine synthase-like 1 (pusl1).